Here is an 877-residue protein sequence, read N- to C-terminus: Neurotrypsin (877 aa).

The N-terminal stretch at 1 to 20 (MTLARFVLALVLGALPEVVS) is a signal peptide. Asparagine 26 is a glycosylation site (N-linked (GlcNAc...) asparagine). Residues 31–90 (HRHRHRHSPPPGLQYPYYLPTQQRPPRTRPPPPLPRFPRPPRALPAQRPHALQAGHTPRP) are disordered. Over residues 44–55 (QYPYYLPTQQRP) the composition is skewed to low complexity. The segment covering 58–73 (TRPPPPLPRFPRPPRA) has biased composition (pro residues). The Kringle domain occupies 95–167 (CPAGEPWVSV…GKVDWGYCDC (73 aa)). Intrachain disulfides connect cysteine 95-cysteine 167, cysteine 111-cysteine 151, cysteine 140-cysteine 165, cysteine 197-cysteine 261, cysteine 210-cysteine 271, cysteine 241-cysteine 251, cysteine 307-cysteine 371, cysteine 320-cysteine 381, cysteine 351-cysteine 361, cysteine 414-cysteine 477, cysteine 427-cysteine 487, cysteine 457-cysteine 467, cysteine 527-cysteine 591, cysteine 540-cysteine 601, cysteine 571-cysteine 581, cysteine 621-cysteine 752, cysteine 663-cysteine 679, cysteine 767-cysteine 833, cysteine 796-cysteine 810, and cysteine 823-cysteine 852. SRCR domains lie at 172 to 273 (VRLR…TCSF), 282 to 383 (IRLV…SCTP), 389 to 489 (IRLA…ACYP), and 502 to 603 (VRLM…ICDY). Positions 621-632 (CGLRLLHRRQKR) are zymogen activation region. In terms of domain architecture, Peptidase S1 spans 633–876 (IIGGKNSLRG…FVPWIKSVTK (244 aa)). Histidine 678 functions as the Charge relay system in the catalytic mechanism. Asparagine 685 carries N-linked (GlcNAc...) asparagine glycosylation. Aspartate 728 acts as the Charge relay system in catalysis. The Charge relay system role is filled by serine 827.

This sequence belongs to the peptidase S1 family.

The protein localises to the secreted. In terms of biological role, plays a role in neuronal plasticity and the proteolytic action may subserve structural reorganizations associated with learning and memory operations. This is Neurotrypsin (PRSS12) from Pongo pygmaeus (Bornean orangutan).